A 254-amino-acid polypeptide reads, in one-letter code: HTH-type transcriptional repressor DasR (254 aa).

The 71-residue stretch at 17–87 folds into the HTH gntR-type domain; sequence RTARVPKYYR…QGKGTFVAKP (71 aa). The segment at residues 47-66 is a DNA-binding region (H-T-H motif); sequence ERTLAAEFDTSRTTVRQALQ.

It is found in the cytoplasm. With respect to regulation, binding to the target genes is abolished by GlcN6P, a central molecule in N-acetylglucosamine metabolism. Global regulator that is part of the nutrient-sensing system. In the absence of glucosamine 6-P (GlcN6P), represses the phosphotransferase system (PTS) specific for the uptake of N-acetylglucosamine (PTSNag), and genes involved in the metabolism of chitin, as well as several genes involved in development, thereby linking carbon availability to morphogenesis. Also regulates the expression of the ABC transporters DasABC and NgcEFG, which are involved in N,N'-diacetylchitobiose ((GlcNAc)2) uptake. Binds to the DNA consensus sequence 5'-ACTGGTCTAGACCACT-3'. This is HTH-type transcriptional repressor DasR (dasR) from Streptomyces coelicolor (strain ATCC BAA-471 / A3(2) / M145).